The chain runs to 347 residues: UDP-galactose/UDP-glucose transporter 5 (347 aa).

8 helical membrane-spanning segments follow: residues 17-37 (LWKA…YGLL), 57-77 (LFLV…ALLA), 116-136 (VQTL…TLIM), 143-163 (FDYL…LFPA), 177-197 (TVWG…TSTF), 218-238 (ICSS…LPAV), 247-267 (CLFD…FISY), and 293-313 (CIWF…IVFG). The interval 325–347 (SEKPPAAQELPRDEEAQPLKGNP) is disordered.

It belongs to the nucleotide-sugar transporter family. UDP-galactose:UMP antiporter (TC 2.A.7.11) subfamily.

Its subcellular location is the membrane. Its function is as follows. Sugar transporter involved in the transport of nucleotide-sugars from cytoplasm into the Golgi and/or the endoplasmic reticulum. The chain is UDP-galactose/UDP-glucose transporter 5 from Arabidopsis thaliana (Mouse-ear cress).